The sequence spans 249 residues: Isoprenyl transferase (249 aa).

The active site involves D25. Residue D25 coordinates Mg(2+). Residues 26 to 29 (GNGR), W30, R38, H42, and 70 to 72 (STE) contribute to the substrate site. N73 functions as the Proton acceptor in the catalytic mechanism. Substrate contacts are provided by residues W74, R76, R197, and 203–205 (RLS). E216 serves as a coordination point for Mg(2+).

Belongs to the UPP synthase family. In terms of assembly, homodimer. Mg(2+) serves as cofactor.

Catalyzes the condensation of isopentenyl diphosphate (IPP) with allylic pyrophosphates generating different type of terpenoids. In Streptococcus thermophilus (strain CNRZ 1066), this protein is Isoprenyl transferase.